The following is a 737-amino-acid chain: uncharacterized protein (737 aa).

7 consecutive transmembrane segments (helical) span residues 11–31 (LSLLLFYFLAFLLLWEWLRPL), 36–56 (ETKHTGFFSVFIGLTFLLTFF), 60–80 (WFVTVPFCVIFTLISIHILFY), 118–138 (TLLFFVLLWLLVYLLHYWVIY), 142–162 (ILFFFLMTVAYITILDTFTPY), 164–184 (ATFAVIRIVLIGFFMLGLLYL), and 200–220 (VLKWFLPLSVLVLAATGFGLA). Residues 556 to 611 (PAQFTSSDTKDSGSDSSSSPKKAKEKQKEEKKQPQKEEKQKEKREPAVSKKPSASH) form a disordered region. Positions 581–603 (KQKEEKKQPQKEEKQKEKREPAV) are enriched in basic and acidic residues. A helical transmembrane segment spans residues 618-638 (LYAALAVLAVLLVAAVLLYVF).

The protein localises to the cell membrane. This is an uncharacterized protein from Bacillus subtilis (strain 168).